A 395-amino-acid chain; its full sequence is Nitrite extrusion protein (395 aa).

12 helical membrane-spanning segments follow: residues 15–35, 44–64, 73–93, 96–116, 133–153, 160–180, 203–223, 240–262, 271–291, 293–313, 330–350, and 357–377; these read SLVA…QITL, ISLV…PLGY, LMFM…SIAD, FDLI…SIGV, GIYG…PVIA, STVQ…VLFG, VLWF…AFTI, AGLR…GFLA, LMFV…SPTI, LYTF…GTVF, IVSA…ASVF, and AIGF…VIWM.

It belongs to the major facilitator superfamily. Nitrate/nitrite porter (TC 2.A.1.8) family.

Its subcellular location is the cell membrane. Involved in excretion of nitrite produced by the dissimilatory reduction of nitrate. This is Nitrite extrusion protein (narK) from Bacillus subtilis (strain 168).